The primary structure comprises 435 residues: ATP-dependent protease ATPase subunit HslU (435 aa).

Residues Val18, 60 to 65 (GVGKTE), Asp248, Glu313, and Arg385 contribute to the ATP site.

It belongs to the ClpX chaperone family. HslU subfamily. As to quaternary structure, a double ring-shaped homohexamer of HslV is capped on each side by a ring-shaped HslU homohexamer. The assembly of the HslU/HslV complex is dependent on binding of ATP.

Its subcellular location is the cytoplasm. Functionally, ATPase subunit of a proteasome-like degradation complex; this subunit has chaperone activity. The binding of ATP and its subsequent hydrolysis by HslU are essential for unfolding of protein substrates subsequently hydrolyzed by HslV. HslU recognizes the N-terminal part of its protein substrates and unfolds these before they are guided to HslV for hydrolysis. The sequence is that of ATP-dependent protease ATPase subunit HslU from Parvibaculum lavamentivorans (strain DS-1 / DSM 13023 / NCIMB 13966).